Reading from the N-terminus, the 259-residue chain is Ubiquitin-conjugating enzyme E2 J2 (259 aa).

At 1–226 the chain is on the cytoplasmic side; that stretch reads MSSTSSKRAP…AGLQQANRHH (226 aa). The 151-residue stretch at 12–162 folds into the UBC core domain; that stretch reads TATQRLKQDY…DKVFCELFPE (151 aa). Cysteine 94 functions as the Glycyl thioester intermediate in the catalytic mechanism. Residues 227–247 form a helical; Anchor for type IV membrane protein membrane-spanning segment; the sequence is GLLGGALANLFVIVGFAAFAY. Over 248 to 259 the chain is Lumenal; the sequence is TVKYVLRSIAQE.

The protein belongs to the ubiquitin-conjugating enzyme family. Auto-ubiquitinated.

The protein resides in the endoplasmic reticulum membrane. It carries out the reaction S-ubiquitinyl-[E1 ubiquitin-activating enzyme]-L-cysteine + [E2 ubiquitin-conjugating enzyme]-L-cysteine = [E1 ubiquitin-activating enzyme]-L-cysteine + S-ubiquitinyl-[E2 ubiquitin-conjugating enzyme]-L-cysteine.. Its pathway is protein modification; protein ubiquitination. Catalyzes the covalent attachment of ubiquitin to other proteins. Seems to function in the selective degradation of misfolded membrane proteins from the endoplasmic reticulum (ERAD). In cooperation with the GATOR2 complex, catalyzes 'Lys-6'-linked ubiquitination of NPRL2. This chain is Ubiquitin-conjugating enzyme E2 J2 (UBE2J2), found in Homo sapiens (Human).